The chain runs to 394 residues: Probable dual specificity protein phosphatase DDB_G0281963 (394 aa).

The Tyrosine-protein phosphatase domain occupies 2–142; the sequence is NDVSRIFPGF…LKKYELILKK (141 aa). The active-site Phosphocysteine intermediate is the Cys-86. Residues 147–191 form a disordered region; sequence PQIVEKESEEEDDDEDDDDDDYDSDEDDDDDSEDDDFEEEFDNVV. The span at 153–188 shows a compositional bias: acidic residues; sequence ESEEEDDDEDDDDDDYDSDEDDDDDSEDDDFEEEFD.

This sequence belongs to the protein-tyrosine phosphatase family. Non-receptor class dual specificity subfamily.

It catalyses the reaction O-phospho-L-tyrosyl-[protein] + H2O = L-tyrosyl-[protein] + phosphate. The catalysed reaction is O-phospho-L-seryl-[protein] + H2O = L-seryl-[protein] + phosphate. It carries out the reaction O-phospho-L-threonyl-[protein] + H2O = L-threonyl-[protein] + phosphate. Its function is as follows. Has a dual specificity toward Ser/Thr and Tyr-containing proteins. The chain is Probable dual specificity protein phosphatase DDB_G0281963 from Dictyostelium discoideum (Social amoeba).